Reading from the N-terminus, the 268-residue chain is L-gamma-glutamyl-L-propargylglycine hydroxylase (268 aa).

It depends on Fe(2+) as a cofactor.

It carries out the reaction L-gamma-glutamyl-L-propargylglycine + 2-oxoglutarate + O2 = L-gamma-glutamyl-(3R)-L-beta-ethynylserine + succinate + CO2. It functions in the pathway amino-acid metabolism. The protein operates within antibiotic biosynthesis. Involved in the biosynthesis of terminal alkyne-containing amino acids such as L-beta-ethynylserine, that are produced as antibiotics by S.cattleya. Catalyzes the hydroxylation of the dipeptide L-gamma-glutamyl-L-propargylglycine, leading to L-gamma-glutamyl-L-beta-ethynylserine. Cannot use L-propargylglycine as substrate. This chain is L-gamma-glutamyl-L-propargylglycine hydroxylase, found in Streptantibioticus cattleyicolor (strain ATCC 35852 / DSM 46488 / JCM 4925 / NBRC 14057 / NRRL 8057) (Streptomyces cattleya).